Here is a 229-residue protein sequence, read N- to C-terminus: Probable ribonuclease H (229 aa).

One can recognise an RNase H type-1 domain in the interval 42–164 (LQDISLEFDK…ADFLANSAAK (123 aa)). The a divalent metal cation site is built by E60, D87, and D156.

This sequence belongs to the RNase H family. It depends on a divalent metal cation as a cofactor.

It catalyses the reaction Endonucleolytic cleavage to 5'-phosphomonoester.. In terms of biological role, endonuclease that specifically degrades the RNA of RNA-DNA hybrids. This is Probable ribonuclease H (RNH1) from Acanthamoeba polyphaga mimivirus (APMV).